Consider the following 912-residue polypeptide: Metabotropic glutamate receptor 4 (912 aa).

The first 32 residues, M1–G32, serve as a signal peptide directing secretion. Over K33–P586 the chain is Extracellular. Cysteines 67 and 109 form a disulfide. Residue N98 is glycosylated (N-linked (GlcNAc...) asparagine). Residues S159, A180 to T182, and Y230 each bind L-glutamate. Cystine bridges form between C249–C538, C372–C388, C428–C435, C520–C539, C524–C542, C545–C557, and C560–C573. A glycan (N-linked (GlcNAc...) asparagine) is linked at N301. D312 provides a ligand contact to L-glutamate. K405 is an L-glutamate binding site. The helical transmembrane segment at W587–V607 threads the bilayer. Topologically, residues T608 to E624 are cytoplasmic. Residues L625–A645 traverse the membrane as a helical segment. The Extracellular segment spans residues E646–S653. A helical transmembrane segment spans residues L654 to L671. Residues T672 to Q699 lie on the Cytoplasmic side of the membrane. Residues L700–V720 form a helical membrane-spanning segment. Over D721 to L751 the chain is Extracellular. Residues S752–I772 form a helical membrane-spanning segment. The Cytoplasmic segment spans residues K773–P786. The helical transmembrane segment at I787–G807 threads the bilayer. Residues T808 to V826 are Extracellular-facing. The helical transmembrane segment at S827 to F847 threads the bilayer. Residues H848–I912 are Cytoplasmic-facing.

Belongs to the G-protein coupled receptor 3 family. Interacts with PICK1.

The protein localises to the cell membrane. Its function is as follows. G-protein coupled receptor for glutamate. Ligand binding causes a conformation change that triggers signaling via guanine nucleotide-binding proteins (G proteins) and modulates the activity of down-stream effectors. Signaling inhibits adenylate cyclase activity. This Mus musculus (Mouse) protein is Metabotropic glutamate receptor 4 (Grm4).